Reading from the N-terminus, the 127-residue chain is UPF0102 protein Geob_1494 (127 aa).

Belongs to the UPF0102 family.

The chain is UPF0102 protein Geob_1494 from Geotalea daltonii (strain DSM 22248 / JCM 15807 / FRC-32) (Geobacter daltonii).